The chain runs to 157 residues: 2-amino-4-hydroxy-6-hydroxymethyldihydropteridine pyrophosphokinase (157 aa).

This sequence belongs to the HPPK family.

The enzyme catalyses 6-hydroxymethyl-7,8-dihydropterin + ATP = (7,8-dihydropterin-6-yl)methyl diphosphate + AMP + H(+). It functions in the pathway cofactor biosynthesis; tetrahydrofolate biosynthesis; 2-amino-4-hydroxy-6-hydroxymethyl-7,8-dihydropteridine diphosphate from 7,8-dihydroneopterin triphosphate: step 4/4. Functionally, catalyzes the transfer of pyrophosphate from adenosine triphosphate (ATP) to 6-hydroxymethyl-7,8-dihydropterin, an enzymatic step in folate biosynthesis pathway. This is 2-amino-4-hydroxy-6-hydroxymethyldihydropteridine pyrophosphokinase (folK) from Campylobacter jejuni subsp. jejuni serotype O:2 (strain ATCC 700819 / NCTC 11168).